Here is a 454-residue protein sequence, read N- to C-terminus: Bifunctional protein GlmU (454 aa).

The segment at M1–R227 is pyrophosphorylase. UDP-N-acetyl-alpha-D-glucosamine contacts are provided by residues L9–G12, K23, Q74, G79–T80, Y101–D103, G138, E152, N167, and N225. D103 is a Mg(2+) binding site. Residue N225 participates in Mg(2+) binding. The linker stretch occupies residues L228–A248. Positions G249–K454 are N-acetyltransferase. Residues R331 and K349 each coordinate UDP-N-acetyl-alpha-D-glucosamine. The active-site Proton acceptor is H361. UDP-N-acetyl-alpha-D-glucosamine is bound by residues Y364 and N375. Acetyl-CoA-binding positions include A378, N384–Y385, S403, A421, and R438.

This sequence in the N-terminal section; belongs to the N-acetylglucosamine-1-phosphate uridyltransferase family. The protein in the C-terminal section; belongs to the transferase hexapeptide repeat family. In terms of assembly, homotrimer. It depends on Mg(2+) as a cofactor.

The protein resides in the cytoplasm. It catalyses the reaction alpha-D-glucosamine 1-phosphate + acetyl-CoA = N-acetyl-alpha-D-glucosamine 1-phosphate + CoA + H(+). The catalysed reaction is N-acetyl-alpha-D-glucosamine 1-phosphate + UTP + H(+) = UDP-N-acetyl-alpha-D-glucosamine + diphosphate. It participates in nucleotide-sugar biosynthesis; UDP-N-acetyl-alpha-D-glucosamine biosynthesis; N-acetyl-alpha-D-glucosamine 1-phosphate from alpha-D-glucosamine 6-phosphate (route II): step 2/2. The protein operates within nucleotide-sugar biosynthesis; UDP-N-acetyl-alpha-D-glucosamine biosynthesis; UDP-N-acetyl-alpha-D-glucosamine from N-acetyl-alpha-D-glucosamine 1-phosphate: step 1/1. Its pathway is bacterial outer membrane biogenesis; LPS lipid A biosynthesis. Its function is as follows. Catalyzes the last two sequential reactions in the de novo biosynthetic pathway for UDP-N-acetylglucosamine (UDP-GlcNAc). The C-terminal domain catalyzes the transfer of acetyl group from acetyl coenzyme A to glucosamine-1-phosphate (GlcN-1-P) to produce N-acetylglucosamine-1-phosphate (GlcNAc-1-P), which is converted into UDP-GlcNAc by the transfer of uridine 5-monophosphate (from uridine 5-triphosphate), a reaction catalyzed by the N-terminal domain. This chain is Bifunctional protein GlmU, found in Actinobacillus pleuropneumoniae serotype 7 (strain AP76).